Consider the following 158-residue polypeptide: GTP-dependent dephospho-CoA kinase (158 aa).

6 residues coordinate GTP: D35, V36, D54, K56, E109, and D132.

It belongs to the GTP-dependent DPCK family.

The catalysed reaction is 3'-dephospho-CoA + GTP = GDP + CoA + H(+). The protein operates within cofactor biosynthesis; coenzyme A biosynthesis. Catalyzes the GTP-dependent phosphorylation of the 3'-hydroxyl group of dephosphocoenzyme A to form coenzyme A (CoA). This chain is GTP-dependent dephospho-CoA kinase, found in Methanococcus maripaludis (strain C7 / ATCC BAA-1331).